A 765-amino-acid chain; its full sequence is Beta-glucosidase cel3A (765 aa).

The N-terminal stretch at 1 to 24 is a signal peptide; that stretch reads MRWSSPTSSSLSLVALLLVAHVDA. Residues N66, N124, N250, N304, N311, N349, N549, N588, N657, and N681 are each glycosylated (N-linked (GlcNAc...) asparagine).

The protein belongs to the glycosyl hydrolase 3 family.

The protein resides in the secreted. It catalyses the reaction Hydrolysis of terminal, non-reducing beta-D-glucosyl residues with release of beta-D-glucose.. The protein operates within glycan metabolism; cellulose degradation. Beta-glucosidases are one of a number of cellulolytic enzymes involved in the degradation of cellulosic biomass. Catalyzes the last step releasing glucose from the inhibitory cellobiose. Shows higher activities on cellobiose and cellotriose but lower activities on laminarioligosaccharides and polymers. The sequence is that of Beta-glucosidase cel3A from Pyricularia oryzae (strain 70-15 / ATCC MYA-4617 / FGSC 8958) (Rice blast fungus).